The following is a 704-amino-acid chain: MIKQFQTELAGKTLHVEIGKYAEQASGSCMVRYGDTTVLVNATASKSPREGIDFFPLSVDYEEKLYAVGKIPGGFIKREARPSEKAVLTSRLIDRPIRPLFPKGYRNEVQVIATVMSVDKDYAPDIVAMIGSSIALSISDIPFGGPTGSVNVGLVNGEFVLNPTSDQRAISDIDLVVSGTKDAIMMIESGANEVTEDQMLDALMFAHEEIKTIVAFIEEIVAEVGKPKQEVQLFAIDETLDMEVRVFAKDKIVTAMKTFDKMERNERLDNVKKEILVHFSKQYENELKSIVEVINSIIKEQFRYMITHDKVRPDERALDEIRPITSEVGILPRTHGTGLFTRGQTQVLTVATLGALGEVQILDGLGEEESKRYMHHYNFPPYSVGEAKFLRGPGRREIGHGALAERALLPMVPSQDDFPYAIRLVSEVLSSNGSSSQASVCGSTLALLDAGVPIKDMVAGIAMGLVKENDKIAILSDIQGMEDALGDMDFKVAGTDKGITAIQMDIKIKGIHKDILKDALEQARVGRLHILDKMKKAIDKPRPELSPFAPRVLKMKIHPDKIRDVIGSGGKTINRIIDETGVKIDIDNDGTIFIAAESQEAVEKAIIIIENIIKDPEVGQNYTGKVIKIMNFGAFLEILPGKEGLLHVSNIAHERVNKVEDVLEVGQEIEVKVMEIDQQGKINLSRKALLPKESKAENTKEEKA.

Mg(2+) contacts are provided by aspartate 483 and aspartate 489. Residues 550 to 609 (PRVLKMKIHPDKIRDVIGSGGKTINRIIDETGVKIDIDNDGTIFIAAESQEAVEKAIIII) form the KH domain. Positions 619 to 687 (GQNYTGKVIK…QQGKINLSRK (69 aa)) constitute an S1 motif domain.

It belongs to the polyribonucleotide nucleotidyltransferase family. Mg(2+) serves as cofactor.

It localises to the cytoplasm. It catalyses the reaction RNA(n+1) + phosphate = RNA(n) + a ribonucleoside 5'-diphosphate. Its function is as follows. Involved in mRNA degradation. Catalyzes the phosphorolysis of single-stranded polyribonucleotides processively in the 3'- to 5'-direction. In Alkaliphilus metalliredigens (strain QYMF), this protein is Polyribonucleotide nucleotidyltransferase 4.